The chain runs to 318 residues: Methionyl-tRNA formyltransferase (318 aa).

Residue 112 to 115 (SILP) coordinates (6S)-5,6,7,8-tetrahydrofolate.

This sequence belongs to the Fmt family.

The catalysed reaction is L-methionyl-tRNA(fMet) + (6R)-10-formyltetrahydrofolate = N-formyl-L-methionyl-tRNA(fMet) + (6S)-5,6,7,8-tetrahydrofolate + H(+). Its function is as follows. Attaches a formyl group to the free amino group of methionyl-tRNA(fMet). The formyl group appears to play a dual role in the initiator identity of N-formylmethionyl-tRNA by promoting its recognition by IF2 and preventing the misappropriation of this tRNA by the elongation apparatus. The chain is Methionyl-tRNA formyltransferase from Shewanella baltica (strain OS185).